The following is a 312-amino-acid chain: Olfactory receptor 7G3 (312 aa).

Over 1–25 (MKAGNFSDTPEFFLLGLSGDPELQP) the chain is Extracellular. A glycan (N-linked (GlcNAc...) asparagine) is linked at Asn5. A helical transmembrane segment spans residues 26 to 46 (ILFMLFLSMYLATMLGNLLII). Residues 47 to 54 (LAVNSDSH) are Cytoplasmic-facing. The chain crosses the membrane as a helical span at residues 55–75 (LHTPMYFLLSILSLVDICFTS). Topologically, residues 76-99 (TTMPKMLVNIQAQAQSINYTGCLT) are extracellular. N-linked (GlcNAc...) asparagine glycosylation occurs at Asn93. Cys97 and Cys189 form a disulfide bridge. Residues 100–120 (QICFVLVFVGLENGILVMMAY) traverse the membrane as a helical segment. At 121–139 (DRFVAICHPLRYNVIMNPK) the chain is on the cytoplasmic side. A helical membrane pass occupies residues 140-160 (LCGLLLLLSFIVSVLDALLHT). Residues 161–197 (LMVLQLTFCIDLEIPHFFCELAHILKLACSDVLINNI) lie on the Extracellular side of the membrane. Residues 198–217 (LVYLVTSLLGVVPLSGIIFS) traverse the membrane as a helical segment. Residues 218–237 (YTRIVSSVMKIPSAGGKYKA) lie on the Cytoplasmic side of the membrane. The helical transmembrane segment at 238–258 (FSICGSHLIVVSLFYGTGFGV) threads the bilayer. The Extracellular segment spans residues 259–271 (YLSSGATHSSRKG). The chain crosses the membrane as a helical span at residues 272 to 292 (AIASVMYTVVTPMLNPLIYSL). The Cytoplasmic portion of the chain corresponds to 293-312 (RNKDMLKALRKLISRIPSFH).

This sequence belongs to the G-protein coupled receptor 1 family.

Its subcellular location is the cell membrane. Its function is as follows. Odorant receptor. This chain is Olfactory receptor 7G3 (OR7G3), found in Homo sapiens (Human).